We begin with the raw amino-acid sequence, 1503 residues long: MLEINDFNAIRISLASPEDIRSWSHGEVTKPETINYRTLKPERDGLFCERIFGPTKDWECFCGKYKRVRYKGVVCDKCGVEVTRSKVRRERMGHINLASPVSHIWFVKGTPSRLGLLLDISPRNLERVLYFASYIIVEVKEDMLQVAREMIQEEYAARRQKIQKQAEEKRIELSTQLTQDLGGMETAQRSTQRQIEEEYRRLRDEIASEAEQLRERLEELSGTLADEDILFRGVTVVEEGEPINENTLDQLDELVEQELEVLEERRRRDLADAELLTDAERERKAYEATQEQERLQERLQRELDHLMREEKEKLEQLDTLKVGRIITETEYRQLRDIAPGVFRADMGAGAVRELIEKTVNLDKLAEELQAEIQSSQGQRRKKATKRLRVVEAFRKSGNRPEWMILTVLPVIPPDLRPMVQLDGGRFATSDLNDLYRRVINRNNRLKRLIELNAPEIIVRNEKRMLQEAVDALIDNGRRGRAVSGKGKHRLKSLSDMLKGKQGRFRQNLLGKRVDYSGRSVIVVGPNLQLHQCGLPKKMALELFKPFVMRRLVERGVAHNIKNAKRAVERVRPEVWDALEEVIKDYLVLLNRAPSLHRLSIQAFEAKLIEGSAIQLHPLVCAAFNADFDGDQMAVHVPLSRKAQEEARTRMLSKYNLLSPAHGEPIITPSQDIVLGCYYLTMVRDGAKGSGKRFSSIDEAMLAYEKHLLDIQAPIWIRMTGTLSGKSDRPVRELPLAADGTPRMLIETTIGRILLNNELQPPLRFRNRLIDKKGLKEIIADCYQYYTNLRNLSEDQLNEVRASHGNKHVQELARIYGSEMTAQQADRIKALGFRYATLGGMTIGIEDIEVPAKKYDIVREAEQLVADVEKQFRRGLITEEERYQEVVRIWQEATKQTIQAVKENLNPFGPVAMMSTSGARGNINQISQMAGMRGLMSDPTGRIIELPIKANFREGLSVLDYFVSTHGGRKGLADTALRTADAGYLTRRLVDVAQDVIITIEDCGTEEGLWLHGADDDELMEKLQVRMLGRILAAPIYHKETGELIADRNTEIDEELATAILASGQESVFVRSPLSCQAEHGLCRLCYGRNLATGKLVEIGEAVGIIAAQSIGEPGTQLTLRTFHTGGVASADDITQGLPRVQEIFEARVPKGKALLAEIDGVVQIVRDEEGVRTIRIVSTDVYTDEYPLGRGFSPTINHESEVYEGQVIAEGPGGAQIVTRLTGKAFIQGDRIIVSQEDHQERELVVPHNARIRVENGERVMAGQQLTDGSANPQELLELQGREAVQRYLVNEAQKVYRSQGVNINDKHIEVIVRQMLRRVRIEDPGDTGLLPGELIDSAEFRRLNNDIVSQGGDPATAATMLLGITKASLNTDSFLAAASFQETTRVLTDAAIQGKVDYLRGLKENVVIGKLIPAGTGIEKRIERPHEDLIGEMARMLEESQQAEEAPAETRRATPLPTPNGNKAPESDNDALLRARLEELLSGDGDNDQSDAEEEDNDLPAF.

4 residues coordinate Zn(2+): Cys-60, Cys-62, Cys-75, and Cys-78. Asp-626, Asp-628, and Asp-630 together coordinate Mg(2+). 4 residues coordinate Zn(2+): Cys-1002, Cys-1075, Cys-1082, and Cys-1085. The disordered stretch occupies residues 1439 to 1503; that stretch reads EESQQAEEAP…EEEDNDLPAF (65 aa). Acidic residues predominate over residues 1486–1503; sequence GDNDQSDAEEEDNDLPAF.

The protein belongs to the RNA polymerase beta' chain family. As to quaternary structure, the RNAP catalytic core consists of 2 alpha, 1 beta, 1 beta' and 1 omega subunit. When a sigma factor is associated with the core the holoenzyme is formed, which can initiate transcription. Mg(2+) is required as a cofactor. The cofactor is Zn(2+).

It catalyses the reaction RNA(n) + a ribonucleoside 5'-triphosphate = RNA(n+1) + diphosphate. Its function is as follows. DNA-dependent RNA polymerase catalyzes the transcription of DNA into RNA using the four ribonucleoside triphosphates as substrates. This Chloroflexus aurantiacus (strain ATCC 29364 / DSM 637 / Y-400-fl) protein is DNA-directed RNA polymerase subunit beta'.